A 96-amino-acid chain; its full sequence is Co-chaperonin GroES (96 aa).

Belongs to the GroES chaperonin family. As to quaternary structure, heptamer of 7 subunits arranged in a ring. Interacts with the chaperonin GroEL.

It localises to the cytoplasm. Functionally, together with the chaperonin GroEL, plays an essential role in assisting protein folding. The GroEL-GroES system forms a nano-cage that allows encapsulation of the non-native substrate proteins and provides a physical environment optimized to promote and accelerate protein folding. GroES binds to the apical surface of the GroEL ring, thereby capping the opening of the GroEL channel. This is Co-chaperonin GroES from Chromohalobacter salexigens (strain ATCC BAA-138 / DSM 3043 / CIP 106854 / NCIMB 13768 / 1H11).